Consider the following 145-residue polypeptide: Large ribosomal subunit protein uL13 (145 aa).

It belongs to the universal ribosomal protein uL13 family. As to quaternary structure, part of the 50S ribosomal subunit.

This protein is one of the early assembly proteins of the 50S ribosomal subunit, although it is not seen to bind rRNA by itself. It is important during the early stages of 50S assembly. The protein is Large ribosomal subunit protein uL13 of Bacillus mycoides (strain KBAB4) (Bacillus weihenstephanensis).